We begin with the raw amino-acid sequence, 302 residues long: Sulfate adenylyltransferase subunit 2 (302 aa).

This sequence belongs to the PAPS reductase family. CysD subfamily. Heterodimer composed of CysD, the smaller subunit, and CysN.

It carries out the reaction sulfate + ATP + H(+) = adenosine 5'-phosphosulfate + diphosphate. It participates in sulfur metabolism; hydrogen sulfide biosynthesis; sulfite from sulfate: step 1/3. In terms of biological role, with CysN forms the ATP sulfurylase (ATPS) that catalyzes the adenylation of sulfate producing adenosine 5'-phosphosulfate (APS) and diphosphate, the first enzymatic step in sulfur assimilation pathway. APS synthesis involves the formation of a high-energy phosphoric-sulfuric acid anhydride bond driven by GTP hydrolysis by CysN coupled to ATP hydrolysis by CysD. The protein is Sulfate adenylyltransferase subunit 2 of Parabacteroides distasonis (strain ATCC 8503 / DSM 20701 / CIP 104284 / JCM 5825 / NCTC 11152).